The chain runs to 292 residues: Tissue factor (292 aa).

The first 32 residues, 1 to 32 (MAPPTRLQVPRPGTAVPYTVLLGWLLAQVARA), serve as a signal peptide directing secretion. Over 33 to 250 (ADTTGRAYNL…SREQGRAREM (218 aa)) the chain is Extracellular. Fibronectin type-III domains follow at residues 35 to 126 (TTGR…PFRN) and 148 to 240 (QVGT…TECT). A glycan (N-linked (GlcNAc...) asparagine) is linked at N41. 2 short sequence motifs (WKS motif) span residues 44–46 (WKS) and 75–77 (WKS). Residues C79 and C87 are joined by a disulfide bond. Residues N114, N154, N167, and N182 are each glycosylated (N-linked (GlcNAc...) asparagine). An intrachain disulfide couples C216 to C239. A helical transmembrane segment spans residues 251–271 (FFIIGAVVVVALLIIVLSVTV). The Cytoplasmic segment spans residues 272-292 (YKCRKARAGPSGKESSPLNIA). The S-palmitoyl cysteine moiety is linked to residue C274.

Belongs to the tissue factor family. As to quaternary structure, interacts with HSPE; the interaction, inhibited by heparin, promotes the generation of activated factor X and activates coagulation in the presence of activated factor VII. In terms of tissue distribution, brain, heart.

The protein localises to the membrane. In terms of biological role, initiates blood coagulation by forming a complex with circulating factor VII or VIIa. The [TF:VIIa] complex activates factors IX or X by specific limited proteolysis. TF plays a role in normal hemostasis by initiating the cell-surface assembly and propagation of the coagulation protease cascade. The protein is Tissue factor (F3) of Oryctolagus cuniculus (Rabbit).